The following is a 530-amino-acid chain: MEDDSLYLGGEWQFNHFSKLTSSRPDAAFAEIQRTSLPEKSPLSCETRVDLCDDLAPVARQLAPREKLPLSSRRPAAVGAGLQNMGNTCYVNASLQCLTYTPPLANYMLSREHSQTCHRHKGCMLCTMQAHITRALHNPGHVIQPSQALAAGFHRGKQEDAHEFLMFTVDAMKKACLPGHKQVDHHSKDTTLIHQIFGGYWRSQIKCLHCHGISDTFDPYLDIALDIQAAQSVQQALEQLVKPEELNGENAYHCGVCLQRAPASKTLTLHTSAKVLILVLKRFSDVTGNKIAKNVQYPECLDMQPYMSQQNTGPLVYVLYAVLVHAGWSCHNGHYFSYVKAQEGQWYKMDDAEVTASSITSVLSQQAYVLFYIQKSEWERHSESVSRGREPRALGAEDTDRRATQGELKRDHPCLQAPELDEHLVERATQESTLDHWKFLQEQNKTKPEFNVRKVEGTLPPDVLVIHQSKYKCGMKNHHPEQQSSLLKLSSTTPTHQESMNTGTLASLRGRARRSKGKNKHSKRALLVCQ.

Positions 80–375 constitute a USP domain; that stretch reads AGLQNMGNTC…QAYVLFYIQK (296 aa). C89 (nucleophile) is an active-site residue. H334 serves as the catalytic Proton acceptor. Basic and acidic residues-rich tracts occupy residues 382-392 and 398-412; these read SESVSRGREPR and DTDRRATQGELKRDH. Disordered stretches follow at residues 382–412 and 476–530; these read SESVSRGREPRALGAEDTDRRATQGELKRDH and KNHH…LVCQ. Low complexity predominate over residues 484 to 495; the sequence is SSLLKLSSTTPT. Polar residues predominate over residues 496–505; that stretch reads HQESMNTGTL. Basic residues predominate over residues 510-524; the sequence is GRARRSKGKNKHSKR.

It belongs to the peptidase C19 family. USP17 subfamily.

It localises to the nucleus. Its subcellular location is the endoplasmic reticulum. It catalyses the reaction Thiol-dependent hydrolysis of ester, thioester, amide, peptide and isopeptide bonds formed by the C-terminal Gly of ubiquitin (a 76-residue protein attached to proteins as an intracellular targeting signal).. Functionally, deubiquitinating enzyme that removes conjugated ubiquitin from specific proteins to regulate different cellular processes that may include cell proliferation, progression through the cell cycle, apoptosis, cell migration, and the cellular response to viral infection. The sequence is that of Ubiquitin carboxyl-terminal hydrolase 17-like protein 22 (USP17L22) from Homo sapiens (Human).